The chain runs to 117 residues: Minor capsid protein p17 (117 aa).

N-linked (GlcNAc...) asparagine; by host glycosylation occurs at Asn12. A helical membrane pass occupies residues 39-59; the sequence is AILLGILILLVIILIIVAIVY. Residues 96-117 form a disordered region; that stretch reads KNSTSQQSHIPSDEQLAELAHS. Asn97 carries an N-linked (GlcNAc...) asparagine; by host glycan.

Belongs to the asfivirus minor capsid protein p17 family. In terms of assembly, interacts with the minor capsid protein M1249L and with the hexon capsid protein p72 capsomers; these interactions form a rigid zipper structure that stabilizes the capsomers. Interacts with host STING1.

Its subcellular location is the virion membrane. The protein localises to the host endoplasmic reticulum membrane. Together with the penton and the other minor capsid proteins (M1249L, p49), forms a complicated network immediately below the outer capsid shell, stabilizing the whole capsid. Three copies of p17 encircle each p72 capsomer in the inner capsid shell, anchoring p72 capsomers on the inner membrane. Required for the assembly of the capsid and icosahedral morphogenesis. Additionally, inhibits the host cGAS-STING pathway through its interaction with STING1 and subsequent interference of the recruitment of downstream components TBK1 and IKBKE. This African swine fever virus (isolate Tick/South Africa/Pretoriuskop Pr4/1996) (ASFV) protein is Minor capsid protein p17.